The primary structure comprises 359 residues: MMKISFIIATLNSGGAERALVTLANALCKEHEVSIIKFHAGESFYKLENEVKVTSLEQFRFDTLYHKIASRFKKFFALRKALKESKSDVFISFLDTTNIACIAAKIGLKTPLIISEHSNEAYLKPKIWRFLRRVSYPFCDALSVLGSSDKVYYERFVKRVKLLLNPCHFSDEISFDSSFEKENLVLFIGRLDHNKNPVMFLKAIAHLDKNLQENYKFVIAGDGQLRQELEYKVKSLGIKVDFLGRVENVKALYEKAKVLCLCSFVEGLPTVLIESLYFEVCRISSSYYNGAKDLIKDNHDGLLVGCDDEIALAKKLELVLNDENFRKELVNNAKQRCKDFEISHIKEEWLKLIAEVKNA.

Position 17 (Glu17) interacts with substrate. Tyr45 provides a ligand contact to UDP-N-acetyl-alpha-D-galactosamine. 71 to 74 provides a ligand contact to substrate; that stretch reads RFKK. UDP-N-acetyl-alpha-D-galactosamine is bound by residues His117, Arg190, Lys195, Val246, and 266–274; that span reads EGLPTVLIE. Arg190 contacts substrate.

It belongs to the glycosyltransferase group 1 family.

It localises to the cell inner membrane. The catalysed reaction is N-acetyl-alpha-D-galactosaminyl-(1-&gt;4)-N-acetyl-alpha-D-galactosaminyl-(1-&gt;3)-N,N'-diacetyl-alpha-D-bacillosaminyl-tri-trans,heptacis-undecaprenyl diphosphate + 3 UDP-N-acetyl-alpha-D-galactosamine = [alpha-D-GalNAc-(1-&gt;4)]4-alpha-D-GalNAc-(1-&gt;3)-alpha-D-diNAcBac-tri-trans,hepta-cis-undecaprenyl diphosphate + 3 UDP + 3 H(+). It functions in the pathway protein modification; protein glycosylation. In terms of biological role, processive glycosyltransferase that is part of the biosynthetic pathway of the lipid-linked oligosaccharide (LLO) that serves as the glycan donor in bacterial protein N-glycosylation. Catalyzes the transfer of exactly three alpha-(1-&gt;4)-N-acetylgalactosamine (GalNAc) units to the growing LLO precursor, GalNAc-alpha-(1-&gt;4)-GalNAc-alpha-(1-&gt;3)-diNAcBac-PP-undecaprenyl. Cannot accept UDP-GlcNAc as substrate. The protein is GalNAc-alpha-(1-&gt;4)-GalNAc-alpha-(1-&gt;3)-diNAcBac-PP-undecaprenol alpha-1,4-N-acetyl-D-galactosaminyltransferase of Campylobacter jejuni subsp. jejuni serotype O:2 (strain ATCC 700819 / NCTC 11168).